The following is a 208-amino-acid chain: Small ribosomal subunit protein bS6 (208 aa).

2 disordered regions span residues 121 to 143 (SENNPDNPDAPVTSGLASVKPRL) and 185 to 208 (NQQTSQANNNQPRFQNQFKKGAKP). The segment covering 185-195 (NQQTSQANNNQ) has biased composition (low complexity).

Belongs to the bacterial ribosomal protein bS6 family.

Its function is as follows. Binds together with bS18 to 16S ribosomal RNA. The polypeptide is Small ribosomal subunit protein bS6 (rpsF) (Mycoplasma genitalium (strain ATCC 33530 / DSM 19775 / NCTC 10195 / G37) (Mycoplasmoides genitalium)).